Consider the following 55-residue polypeptide: Large ribosomal subunit protein bL33 (55 aa).

In terms of processing, the protein is methylated on either Ala-2 or Lys-3.

This chain is Large ribosomal subunit protein bL33, found in Rhodopseudomonas palustris (strain ATCC BAA-98 / CGA009).